The primary structure comprises 430 residues: Cytochrome P450 monooxygenase FGSG_15680 (430 aa).

Residue cysteine 351 coordinates heme.

The protein belongs to the cytochrome P450 family. Heme serves as cofactor.

The protein operates within mycotoxin biosynthesis. Functionally, cytochrome P450 monooxygenase; part of the gene cluster that mediates the biosynthesis of gramillins A and B, bicyclic lipopeptides that induce cell death in maize leaves but not in wheat leaves. The nonribosomal peptide synthetase GRA1 incorporates respectively a glutamic adic (Glu), a leucine (Leu), a serine (Ser), a hydroxyglutamine (HOGln), a 2-amino decanoic acid, and 2 cysteins (CysB and CysA). The biosynthesis of 2-amino decanoic acid incorporated in gramillins could be initiated by a fatty acid synthase composed of the alpha and beta subunits FGSG_00036 and FGSG_11656. The cytochrome P450 monooxygenase FGSG_15680 could hydroxylate the fatty acid chain. Subsequent oxidation to the ketone by the oxidoreductase FGSG_00048 and transamination by aminotransferase FGSG_00049 could form 2-amino-decanoic acid. On the other hand, FGSG_15680 could also be responsible for the HO-modified glutamine at the gamma-position. Whether hydroxylation occurs on the fully assembled product or on the Gln residue prior to assembly into the gramillins requires further proof. The thioredoxin FGSG_00043 could also be required for the disulfide-bond formation between CysA and CysB. The specific involvement of the remaining proteins from the cluster is more difficult to discern, but could have broader regulatory (FGSG_00040 and FGSG_11657) or enzymatic functions (FGSG_00044 and FGSG_00045). The final C-domain of GRA1 does not possess the expected sequence of a termination CT domain, often implicated in macrocyclization and release of a cyclopeptidein fungal NRPs; and the thioesterase FGSG_00047 may act in concert with the terminal C-domain of GRA1 to catalyze the formation of the macrocyclic anhydride and release of the products. The protein is Cytochrome P450 monooxygenase FGSG_15680 of Gibberella zeae (strain ATCC MYA-4620 / CBS 123657 / FGSC 9075 / NRRL 31084 / PH-1) (Wheat head blight fungus).